The following is a 347-amino-acid chain: Photosystem II protein D1 (347 aa).

A run of 3 helical transmembrane segments spans residues 31 to 48 (YIGWFGIFMFPLTGLAII), 120 to 135 (HFIGGVSSWMGREWEF), and 144 to 158 (WIYLAFSAPLVAATA). Residue histidine 120 coordinates chlorophyll a. Residue tryptophan 128 coordinates pheophytin a. [CaMn4O5] cluster-binding residues include aspartate 172 and glutamate 191. The helical transmembrane segment at 199 to 220 (FHILGVAGVFGGSLFSAMHGSL) threads the bilayer. Residue histidine 200 coordinates chlorophyll a. Residues histidine 217 and 266 to 267 (SF) contribute to the a quinone site. Histidine 217 is a Fe cation binding site. Histidine 274 is a Fe cation binding site. The chain crosses the membrane as a helical span at residues 276–290 (FLAAWPVIGIWFTAL). Positions 334, 335, and 344 each coordinate [CaMn4O5] cluster.

The protein belongs to the reaction center PufL/M/PsbA/D family. PSII is composed of 1 copy each of membrane proteins PsbA, PsbB, PsbC, PsbD, PsbE, PsbF, PsbH, PsbI, PsbJ, PsbK, PsbL, PsbM, PsbT, PsbX, PsbY, PsbZ, Psb30/Ycf12, at least 3 peripheral proteins of the oxygen-evolving complex and a large number of cofactors. It forms dimeric complexes. The cofactor is The D1/D2 heterodimer binds P680, chlorophylls that are the primary electron donor of PSII, and subsequent electron acceptors. It shares a non-heme iron and each subunit binds pheophytin, quinone, additional chlorophylls, carotenoids and lipids. D1 provides most of the ligands for the Mn4-Ca-O5 cluster of the oxygen-evolving complex (OEC). There is also a Cl(-1) ion associated with D1 and D2, which is required for oxygen evolution. The PSII complex binds additional chlorophylls, carotenoids and specific lipids.. In terms of processing, tyr-163 forms a radical intermediate that is referred to as redox-active TyrZ, YZ or Y-Z.

Its subcellular location is the plastid. It is found in the chloroplast thylakoid membrane. It catalyses the reaction 2 a plastoquinone + 4 hnu + 2 H2O = 2 a plastoquinol + O2. Its function is as follows. Photosystem II (PSII) is a light-driven water:plastoquinone oxidoreductase that uses light energy to abstract electrons from H(2)O, generating O(2) and a proton gradient subsequently used for ATP formation. It consists of a core antenna complex that captures photons, and an electron transfer chain that converts photonic excitation into a charge separation. The D1/D2 (PsbA/PsbD) reaction center heterodimer binds P680, the primary electron donor of PSII as well as several subsequent electron acceptors. This chain is Photosystem II protein D1, found in Alexandrium tamarense (Red tide dinoflagellate).